Consider the following 490-residue polypeptide: Bifunctional protein GlmU (490 aa).

Residues 1–241 (MSSPGDTAVL…SALVAGVNNR (241 aa)) form a pyrophosphorylase region. UDP-N-acetyl-alpha-D-glucosamine-binding positions include 12–15 (LAAG), lysine 26, glutamine 83, 88–89 (GT), 112–114 (SGD), glycine 151, glutamate 166, asparagine 181, and asparagine 239. Aspartate 114 lines the Mg(2+) pocket. Asparagine 239 contributes to the Mg(2+) binding site. The tract at residues 242–262 (VQLAQLGAELNRRIVAAHQLA) is linker. The tract at residues 263-490 (GVTVVDPATT…AGGRPAGEAE (228 aa)) is N-acetyltransferase. Residues arginine 344 and lysine 362 each contribute to the UDP-N-acetyl-alpha-D-glucosamine site. The active-site Proton acceptor is histidine 374. UDP-N-acetyl-alpha-D-glucosamine-binding residues include tyrosine 377 and asparagine 388. Acetyl-CoA is bound by residues alanine 391, 397-398 (NY), serine 416, and alanine 434. Residues 462 to 490 (RRKRPGSAAARAAEAAEKAAGGRPAGEAE) form a disordered region. Over residues 467–490 (GSAAARAAEAAEKAAGGRPAGEAE) the composition is skewed to low complexity.

It in the N-terminal section; belongs to the N-acetylglucosamine-1-phosphate uridyltransferase family. The protein in the C-terminal section; belongs to the transferase hexapeptide repeat family. Homotrimer. The cofactor is Mg(2+).

It localises to the cytoplasm. It catalyses the reaction alpha-D-glucosamine 1-phosphate + acetyl-CoA = N-acetyl-alpha-D-glucosamine 1-phosphate + CoA + H(+). It carries out the reaction N-acetyl-alpha-D-glucosamine 1-phosphate + UTP + H(+) = UDP-N-acetyl-alpha-D-glucosamine + diphosphate. Its pathway is nucleotide-sugar biosynthesis; UDP-N-acetyl-alpha-D-glucosamine biosynthesis; N-acetyl-alpha-D-glucosamine 1-phosphate from alpha-D-glucosamine 6-phosphate (route II): step 2/2. It participates in nucleotide-sugar biosynthesis; UDP-N-acetyl-alpha-D-glucosamine biosynthesis; UDP-N-acetyl-alpha-D-glucosamine from N-acetyl-alpha-D-glucosamine 1-phosphate: step 1/1. It functions in the pathway bacterial outer membrane biogenesis; LPS lipid A biosynthesis. In terms of biological role, catalyzes the last two sequential reactions in the de novo biosynthetic pathway for UDP-N-acetylglucosamine (UDP-GlcNAc). The C-terminal domain catalyzes the transfer of acetyl group from acetyl coenzyme A to glucosamine-1-phosphate (GlcN-1-P) to produce N-acetylglucosamine-1-phosphate (GlcNAc-1-P), which is converted into UDP-GlcNAc by the transfer of uridine 5-monophosphate (from uridine 5-triphosphate), a reaction catalyzed by the N-terminal domain. In Mycobacterium avium (strain 104), this protein is Bifunctional protein GlmU.